The following is a 226-amino-acid chain: MLTWLQRNSLTFPPLEKAMRDPNGLLAAGGDLSADRLIQAYRHGCFPWFSEGQPILWWSPDPRTVLFPDELHVSRSLGKLMRKQRYRVTFDQDFDAVIRACAAPREYADGTWITEAMQDAYIELHRRGFAHSVEVWDEGELVGGLYGLAMGQLFFGESMFSRADNASKYGFATLVQHLREAGFVLIDCQMPTDHLHSLGARAISRQTFADYLARHLDQPNHATWVC.

It belongs to the L/F-transferase family.

The protein localises to the cytoplasm. It catalyses the reaction N-terminal L-lysyl-[protein] + L-leucyl-tRNA(Leu) = N-terminal L-leucyl-L-lysyl-[protein] + tRNA(Leu) + H(+). It carries out the reaction N-terminal L-arginyl-[protein] + L-leucyl-tRNA(Leu) = N-terminal L-leucyl-L-arginyl-[protein] + tRNA(Leu) + H(+). The enzyme catalyses L-phenylalanyl-tRNA(Phe) + an N-terminal L-alpha-aminoacyl-[protein] = an N-terminal L-phenylalanyl-L-alpha-aminoacyl-[protein] + tRNA(Phe). In terms of biological role, functions in the N-end rule pathway of protein degradation where it conjugates Leu, Phe and, less efficiently, Met from aminoacyl-tRNAs to the N-termini of proteins containing an N-terminal arginine or lysine. The protein is Leucyl/phenylalanyl-tRNA--protein transferase of Pseudomonas fluorescens (strain Pf0-1).